The sequence spans 122 residues: ATP synthase epsilon chain (122 aa).

Over residues 97-112 (EDLKSERELTRSRGDA) the composition is skewed to basic and acidic residues. Residues 97–122 (EDLKSERELTRSRGDAALRATRRLNS) are disordered.

This sequence belongs to the ATPase epsilon chain family. F-type ATPases have 2 components, CF(1) - the catalytic core - and CF(0) - the membrane proton channel. CF(1) has five subunits: alpha(3), beta(3), gamma(1), delta(1), epsilon(1). CF(0) has three main subunits: a, b and c.

The protein resides in the cell membrane. In terms of biological role, produces ATP from ADP in the presence of a proton gradient across the membrane. The polypeptide is ATP synthase epsilon chain (Corynebacterium aurimucosum (strain ATCC 700975 / DSM 44827 / CIP 107346 / CN-1) (Corynebacterium nigricans)).